Here is a 231-residue protein sequence, read N- to C-terminus: Small ribosomal subunit protein uS2c (231 aa).

It belongs to the universal ribosomal protein uS2 family.

It localises to the plastid. Its subcellular location is the chloroplast. The polypeptide is Small ribosomal subunit protein uS2c (rps2) (Gracilaria tenuistipitata var. liui (Red alga)).